The chain runs to 1158 residues: Voltage-gated inwardly rectifying potassium channel KCNH2 (1158 aa).

Topologically, residues 1–402 are cytoplasmic; the sequence is MPVRRGHVAP…RIHRWTILHY (402 aa). One can recognise a PAS domain in the interval 17–88; it reads TIIRKFEGQS…AAQIAQALLG (72 aa). Positions 92-144 constitute a PAC domain; that stretch reads RKVEIAFYRKDGSCFLCLVDVVPVKNEDGAVIMFILNFEVVMEKDMVGSPTHD. The segment at 232 to 314 is disordered; the sequence is RALVGSSSPP…GAMHPLRGGL (83 aa). A Phosphoserine modification is found at Ser239. Residues 258 to 269 are compositionally biased toward polar residues; the sequence is PDASGSSCSLAR. A phosphoserine mark is found at Ser283, Ser284, Ser319, and Ser350. Residues 403–423 traverse the membrane as a helical segment; that stretch reads SPFKAVWDWLILLLVIYTAVF. Residues 424 to 449 are Extracellular-facing; it reads TPYSAAFLLKETEEGPPAPDCGYACQ. The chain crosses the membrane as a helical span at residues 450–470; that stretch reads PLAVVDFIVDIMFIVDILINF. Residues 471–494 lie on the Cytoplasmic side of the membrane; sequence RTTYVNANEEVVSHPGRIAVHYFK. A helical membrane pass occupies residues 495 to 515; it reads GWFLIDMVAAIPFDLLIFGSG. The Extracellular segment spans residues 516–519; the sequence is SEEL. Residues 520–540 traverse the membrane as a helical; Voltage-sensor segment; it reads IGLLKTARLLRLVRVARKLDR. Topologically, residues 541-546 are cytoplasmic; the sequence is YSEYGA. A helical membrane pass occupies residues 547-567; the sequence is AVLFLLMCTFALIAHWLACIW. Topologically, residues 568–610 are extracellular; that stretch reads YAIGNMEQPHMDSRIGWLHNLGDQIGKPYNSSGLGGPSIKDKY. N-linked (GlcNAc...) asparagine glycosylation occurs at Asn597. The pore-forming intramembrane region spans 611 to 631; it reads VTALYFTFSSLTSVGFGNVSP. Residues 623–628 carry the Selectivity filter motif; the sequence is SVGFGN. Residues 632–637 lie on the Extracellular side of the membrane; the sequence is NTNSEK. The helical transmembrane segment at 638–658 threads the bilayer; the sequence is IFSICVMLIGSLMYASIFGNV. Over 659 to 1158 the chain is Cytoplasmic; that stretch reads SAIIQRLYSG…LHRHGSDPGS (500 aa). The tract at residues 741-841 is cNMP-binding domain; it reads PFRGATKGCL…IHRDDLLEVL (101 aa). The interval 869 to 987 is disordered; that stretch reads GSPGSAELEG…KSSDTCNPLS (119 aa). Phosphoserine is present on residues Ser870 and Ser873. A compositionally biased stretch (basic residues) spans 882-891; that stretch reads RQRKRKLSFR. Residues 910-926 are compositionally biased toward gly residues; the sequence is GRAGAGPSGRGRPGGPW. Over residues 927-938 the composition is skewed to low complexity; it reads GESPSSGPSSPE. Residues 959–969 show a composition bias toward pro residues; the sequence is SPRPPGEPPGG. Arg1013 is subject to Omega-N-methylarginine. Residues 1034-1061 are a coiled coil; it reads RGDVEGRLDALQRQLNRLETRLSADMAT. The segment at 1116-1158 is disordered; the sequence is FEELPPGAPELPQDGPPRRLSLPGQLGALTSQPLHRHGSDPGS. Ser1136 bears the Phosphoserine mark.

This sequence belongs to the potassium channel family. H (Eag) (TC 1.A.1.20) subfamily. Kv11.1/KCNH2 sub-subfamily. In terms of assembly, the potassium channel is probably composed of a homo- or heterotetrameric complex of pore-forming alpha subunits that can associate with modulating beta subunits. Interacts with DNAJB12 and DNAJB14; chaperones DNAJB12 and DNAJB14 promote tetramerization. Heteromultimer with KCNH6/ERG2 and KCNH7/ERG3. Interacts with ALG10B. Forms a stable complex with KCNE1 or KCNE2, and that this heteromultimerization regulates Inward rectifier potassium channel activity. Interacts with CANX. The core-glycosylated, but not the fully glycosylated form interacts with RNF207. Interacts with NDFIP1 and NDFIP2; this interaction decreases the cell membrane expression by targeting KCNH2, through interaction with NEDD4L, for the degradation through the multivesicular bodies (MVBs)-lysosomal pathway. Phosphorylated on serine and threonine residues. Phosphorylation by PKA inhibits ion conduction. In terms of tissue distribution, highly expressed in left and right atria of the heart, in cortex and hippocampus; detected at intermediate levels in left and right ventricle, Purkinje fibers, cerebellum, thalamus and basal ganglia; detected at low levels in liver, spleen and kidney.

It is found in the cell membrane. The catalysed reaction is K(+)(in) = K(+)(out). Functionally, pore-forming (alpha) subunit of voltage-gated inwardly rectifying potassium channel. Characterized by unusual gating kinetics by producing relatively small outward currents during membrane depolarization and large inward currents during subsequent repolarization which reflect a rapid inactivation during depolarization and quick recovery from inactivation but slow deactivation (closing) during repolarization. Channel properties are modulated by cAMP and subunit assembly. Forms a stable complex with KCNE1 or KCNE2, and that this heteromultimerization regulates inward rectifier potassium channel activity. The sequence is that of Voltage-gated inwardly rectifying potassium channel KCNH2 from Canis lupus familiaris (Dog).